Reading from the N-terminus, the 32-residue chain is U3-theraphotoxin-Hhn1r (32 aa).

3 cysteine pairs are disulfide-bonded: Cys-2–Cys-15, Cys-9–Cys-20, and Cys-14–Cys-27.

This sequence belongs to the neurotoxin 10 (Hwtx-1) family. 16 (Hntx-8) subfamily. In terms of tissue distribution, expressed by the venom gland.

It is found in the secreted. Its function is as follows. Ion channel inhibitor. The chain is U3-theraphotoxin-Hhn1r from Cyriopagopus hainanus (Chinese bird spider).